We begin with the raw amino-acid sequence, 326 residues long: RNA-binding motif protein, X-linked 2 (326 aa).

Residue Lys8 forms a Glycyl lysine isopeptide (Lys-Gly) (interchain with G-Cter in SUMO2) linkage. In terms of domain architecture, RRM spans 36-114 (AWIFVGGLPY…RTIRVDHVSN (79 aa)). A disordered region spans residues 117-326 (APQESEDVDD…SYHGSDRRHH (210 aa)). Position 140 is a phosphothreonine (Thr140). Ser149 bears the Phosphoserine mark. The segment covering 157–172 (TKKHKKDKKEKKKRKK) has biased composition (basic residues). Over residues 177–190 (GQAQAEQPSCSRSA) the composition is skewed to polar residues. Basic and acidic residues-rich tracts occupy residues 191-200 (TVKEKKDERA), 207-219 (KTSE…EHRE), 236-245 (ARAEDPECKA), and 255-273 (KSAS…ERGR). Ser274 carries the phosphoserine modification. Residues 291–312 (HRSRSRSRSPDKSHRHKKYRHS) show a composition bias toward basic residues. The segment covering 313-326 (RERDSYHGSDRRHH) has biased composition (basic and acidic residues).

The protein belongs to the IST3 family. Part of the activated spliceosome B/catalytic step 1 spliceosome, one of the forms of the spliceosome which has a well-formed active site but still cannot catalyze the branching reaction and is composed of at least 52 proteins, the U2, U5 and U6 snRNAs and the pre-mRNA. Component of the minor spliceosome, which splices U12-type introns.

The protein resides in the nucleus. Functionally, involved in pre-mRNA splicing as component of the activated spliceosome. As a component of the minor spliceosome, involved in the splicing of U12-type introns in pre-mRNAs. The protein is RNA-binding motif protein, X-linked 2 (Rbmx2) of Mus musculus (Mouse).